Reading from the N-terminus, the 291-residue chain is ATP synthase gamma chain (291 aa).

It belongs to the ATPase gamma chain family. As to quaternary structure, F-type ATPases have 2 components, CF(1) - the catalytic core - and CF(0) - the membrane proton channel. CF(1) has five subunits: alpha(3), beta(3), gamma(1), delta(1), epsilon(1). CF(0) has three main subunits: a, b and c.

Its subcellular location is the cell inner membrane. Produces ATP from ADP in the presence of a proton gradient across the membrane. The gamma chain is believed to be important in regulating ATPase activity and the flow of protons through the CF(0) complex. This is ATP synthase gamma chain from Caulobacter vibrioides (strain NA1000 / CB15N) (Caulobacter crescentus).